The following is a 550-amino-acid chain: Chaperonin GroEL (550 aa).

ATP contacts are provided by residues threonine 30–proline 33, lysine 51, aspartate 87–threonine 91, glycine 415, and aspartate 495.

This sequence belongs to the chaperonin (HSP60) family. Forms a cylinder of 14 subunits composed of two heptameric rings stacked back-to-back. Interacts with the co-chaperonin GroES.

Its subcellular location is the cytoplasm. The catalysed reaction is ATP + H2O + a folded polypeptide = ADP + phosphate + an unfolded polypeptide.. In terms of biological role, together with its co-chaperonin GroES, plays an essential role in assisting protein folding. The GroEL-GroES system forms a nano-cage that allows encapsulation of the non-native substrate proteins and provides a physical environment optimized to promote and accelerate protein folding. This chain is Chaperonin GroEL, found in Shewanella piezotolerans (strain WP3 / JCM 13877).